A 1050-amino-acid polypeptide reads, in one-letter code: DNA ligase 4 (1050 aa).

The disordered stretch occupies residues 1–22; sequence MNTNRRSRSPDEEALEEDQHQY. ATP is bound by residues glutamate 329, lysine 331, leucine 332, arginine 336, glutamate 398, phenylalanine 438, glutamate 498, lysine 503, lysine 520, and lysine 522. The active-site N6-AMP-lysine intermediate is the lysine 331. A Mg(2+)-binding site is contributed by glutamate 398. A Mg(2+)-binding site is contributed by glutamate 498. Over residues 691–702 the composition is skewed to basic and acidic residues; the sequence is QEQERKKMEMEN. Positions 691–711 are disordered; the sequence is QEQERKKMEMENRKRKPATKR. BRCT domains are found at residues 742–840 and 936–1049; these read ASKR…KENK and LRSF…EYVA.

Belongs to the ATP-dependent DNA ligase family. It depends on Mg(2+) as a cofactor.

The protein resides in the nucleus. It catalyses the reaction ATP + (deoxyribonucleotide)n-3'-hydroxyl + 5'-phospho-(deoxyribonucleotide)m = (deoxyribonucleotide)n+m + AMP + diphosphate.. In terms of biological role, DNA ligase involved in DNA non-homologous end joining (NHEJ); required for double-strand break (DSB) repair. This Neurospora crassa (strain ATCC 24698 / 74-OR23-1A / CBS 708.71 / DSM 1257 / FGSC 987) protein is DNA ligase 4 (mus-53).